The primary structure comprises 172 residues: Dual-action ribosomal maturation protein DarP (172 aa).

The protein belongs to the DarP family.

It localises to the cytoplasm. Member of a network of 50S ribosomal subunit biogenesis factors which assembles along the 30S-50S interface, preventing incorrect 23S rRNA structures from forming. Promotes peptidyl transferase center (PTC) maturation. In Ectopseudomonas mendocina (strain ymp) (Pseudomonas mendocina), this protein is Dual-action ribosomal maturation protein DarP.